We begin with the raw amino-acid sequence, 960 residues long: RNA polymerase II subunit A C-terminal domain phosphatase (960 aa).

Position 1 is an N-acetylmethionine (Met1). Positions 178 to 341 (HRNRKLVLMV…PPAARETQAR (164 aa)) constitute an FCP1 homology domain. The tract at residues 331 to 580 (APPAARETQA…EEDTDDDDHL (250 aa)) is disordered. Over residues 439–448 (PGVQPTQGDA) the composition is skewed to polar residues. Residues 453–463 (LDFDLSSDSES) show a composition bias toward acidic residues. Ser530 is modified (phosphoserine). A compositionally biased stretch (polar residues) spans 547–556 (ESQNSEQSGV). A compositionally biased stretch (acidic residues) spans 566 to 578 (VGEEEEEDTDDDD). The 100-residue stretch at 619 to 718 (LKSKVLADVA…DKVEEQLFPL (100 aa)) folds into the BRCT domain. A phosphoserine mark is found at Ser664 and Ser730. At Lys770 the chain carries N6-acetyllysine. Disordered stretches follow at residues 770-834 (KLIR…MSEA) and 854-948 (DILG…ADEM). Residues Ser830, Ser860, and Ser863 each carry the phosphoserine modification. Positions 854 to 864 (DILGEGSDDSD) are enriched in acidic residues. The span at 865 to 881 (IEKKKPEDQDNEQERAP) shows a compositional bias: basic and acidic residues. Residues 934 to 947 (SNDDEEGSSSEADE) show a composition bias toward acidic residues.

Homodimer. Interacts with GTF2F1. Interacts with WDR77, SNRPB and SNRNP70. Post-translationally, phosphorylated. In the presence of TFIIF, the phosphorylated form has an increased CTD phosphatase activity. The phosphorylation is required for the physical interaction with GTF2F1.

It localises to the nucleus. The protein resides in the cytoplasm. It is found in the cytoskeleton. The protein localises to the microtubule organizing center. Its subcellular location is the centrosome. It localises to the spindle. The protein resides in the spindle pole. It is found in the midbody. The enzyme catalyses O-phospho-L-seryl-[protein] + H2O = L-seryl-[protein] + phosphate. The catalysed reaction is O-phospho-L-threonyl-[protein] + H2O = L-threonyl-[protein] + phosphate. Processively dephosphorylates 'Ser-2' and 'Ser-5' of the heptad repeats YSPTSPS in the C-terminal domain of the largest RNA polymerase II subunit. This promotes the activity of RNA polymerase II. Plays a role in the exit from mitosis by dephosphorylating crucial mitotic substrates (USP44, CDC20 and WEE1) that are required for M-phase-promoting factor (MPF)/CDK1 inactivation. This chain is RNA polymerase II subunit A C-terminal domain phosphatase (Ctdp1), found in Mus musculus (Mouse).